A 661-amino-acid chain; its full sequence is Serine/threonine-protein phosphatase rdgC (661 aa).

The region spanning 7–32 is the IQ domain; that stretch reads RAAIFIQKWYRRHQARREMQRRCNWQ. Residues 105 to 413 form a catalytic region; the sequence is IDLLIDVFRK…HFVQYISAAS (309 aa). Mn(2+)-binding residues include Asp-158, His-160, Asp-187, and Asn-219. His-220 functions as the Proton donor in the catalytic mechanism. Residues His-271 and His-360 each coordinate Mn(2+). 3 consecutive EF-hand domains span residues 441 to 476, 526 to 561, and 566 to 601; these read DHRDELEDEFRKYDPKDSGYISISHWCKVMENVTKL, ANKASLVAIFNIIDADNSGEITLDEFETAIDLLVAH, and YSKAEMLEKCRMMDLNGDGKVDLNEFLEAFRLSDLH. Residues Asp-539, Asp-541, Ser-543, Glu-545, Glu-550, Asp-579, Asn-581, Asp-583, Lys-585, and Glu-590 each coordinate Ca(2+). Positions 606-625 are disordered; the sequence is QDENIRRRSTGRPSVAKTAT.

It belongs to the PPP phosphatase family. Mn(2+) serves as cofactor. Expressed in the visual system of the fly, as well as in the mushroom bodies of the central brain.

The enzyme catalyses O-phospho-L-seryl-[protein] + H2O = L-seryl-[protein] + phosphate. It catalyses the reaction O-phospho-L-threonyl-[protein] + H2O = L-threonyl-[protein] + phosphate. Phosphatase required to prevent light-induced retinal degeneration. The sequence is that of Serine/threonine-protein phosphatase rdgC (rdgC) from Drosophila melanogaster (Fruit fly).